We begin with the raw amino-acid sequence, 134 residues long: UPF0102 protein Dshi_2830 (134 aa).

The protein belongs to the UPF0102 family.

This is UPF0102 protein Dshi_2830 from Dinoroseobacter shibae (strain DSM 16493 / NCIMB 14021 / DFL 12).